Here is a 225-residue protein sequence, read N- to C-terminus: NAD(P)H-quinone oxidoreductase subunit K, chloroplastic (225 aa).

Residues cysteine 43, cysteine 44, cysteine 108, and cysteine 139 each contribute to the [4Fe-4S] cluster site.

Belongs to the complex I 20 kDa subunit family. NDH is composed of at least 16 different subunits, 5 of which are encoded in the nucleus. Requires [4Fe-4S] cluster as cofactor.

The protein resides in the plastid. The protein localises to the chloroplast thylakoid membrane. The enzyme catalyses a plastoquinone + NADH + (n+1) H(+)(in) = a plastoquinol + NAD(+) + n H(+)(out). It catalyses the reaction a plastoquinone + NADPH + (n+1) H(+)(in) = a plastoquinol + NADP(+) + n H(+)(out). In terms of biological role, NDH shuttles electrons from NAD(P)H:plastoquinone, via FMN and iron-sulfur (Fe-S) centers, to quinones in the photosynthetic chain and possibly in a chloroplast respiratory chain. The immediate electron acceptor for the enzyme in this species is believed to be plastoquinone. Couples the redox reaction to proton translocation, and thus conserves the redox energy in a proton gradient. This Agrostis stolonifera (Creeping bentgrass) protein is NAD(P)H-quinone oxidoreductase subunit K, chloroplastic.